Consider the following 277-residue polypeptide: Large ribosomal subunit protein uL2 (277 aa).

Residues 222-277 are disordered; it reads GVAMNPVDHPHGGGEGRTSGGRHPVSPWGKSTKGKRTRSNKATDKFIMHTRHQRKK.

It belongs to the universal ribosomal protein uL2 family. In terms of assembly, part of the 50S ribosomal subunit. Forms a bridge to the 30S subunit in the 70S ribosome.

In terms of biological role, one of the primary rRNA binding proteins. Required for association of the 30S and 50S subunits to form the 70S ribosome, for tRNA binding and peptide bond formation. It has been suggested to have peptidyltransferase activity; this is somewhat controversial. Makes several contacts with the 16S rRNA in the 70S ribosome. The polypeptide is Large ribosomal subunit protein uL2 (Bartonella quintana (strain Toulouse) (Rochalimaea quintana)).